The sequence spans 449 residues: Delta(8)-fatty-acid desaturase 2 (449 aa).

A Cytochrome b5 heme-binding domain is found at 7–91 (KRYVTSEDLK…VRDHHVSDVS (85 aa)). Residues His-42 and His-65 each contribute to the heme site. Helical transmembrane passes span 113–133 (VTLYTLTCVGVMLAAVLYGVL) and 138–158 (IWAHLISAVLLGLLWIQSAYV). The Histidine box-1 motif lies at 160-164 (HDSGH). The helical transmembrane segment at 176 to 196 (LIQLLSGNCLTGISIAWWKWT) threads the bilayer. A Histidine box-2 motif is present at residues 197–201 (HNAHH). Helical transmembrane passes span 255 to 275 (FYPVMCVGRINLFIQTFLLLF), 284 to 304 (ALNIAGILVFWTWFPLLVSFL), and 311 to 331 (FIFVFVSFAVTAIQHVQFCLN). Residues 374 to 378 (QLEHH) carry the Histidine box-3 motif.

This sequence belongs to the fatty acid desaturase type 1 family. It depends on Fe cation as a cofactor. Highly expressed in flowers and siliques. Expressed at low levels in roots, leaves and stems.

The protein resides in the endoplasmic reticulum membrane. It catalyses the reaction an N-acyl-(4R)-4-hydroxysphinganine + 2 Fe(II)-[cytochrome b5] + O2 + 2 H(+) = a (4R,8E)-4-hydroxysphingenine ceramide + 2 Fe(III)-[cytochrome b5] + 2 H2O. The enzyme catalyses an N-acyl-(4R)-4-hydroxysphinganine + 2 Fe(II)-[cytochrome b5] + O2 + 2 H(+) = a (4R,8Z)-4-hydroxysphing-8-enine ceramide + 2 Fe(III)-[cytochrome b5] + 2 H2O. Functionally, plays a major role as delta(8)-fatty-acid desaturase which introduces a double bond at the 8-position in the long-chain base (LCB) of ceramides with or without a hydroxy group at the 4-position. The enzyme produces both the 8E and 8Z isomers (in a 4:1 ratio). This structural modification contributes to the quantitative partitioning of ceramides between the two major sphingolipid classes, glucosylceramides and glycosylinositolphosphoryl ceramides. Sphingolipids are important membrane components involved in environmental stress responses, such as resistance to chilling, and act as cell signaling molecules. In Arabidopsis thaliana (Mouse-ear cress), this protein is Delta(8)-fatty-acid desaturase 2 (SLD2).